We begin with the raw amino-acid sequence, 359 residues long: Caffeic acid 3-O-methyltransferase (359 aa).

126–132 (MNQDKVL) contacts substrate. The substrate binding stretch occupies residues 158–176 (AFEYHGTDPRFNKVFNRGM). 5 residues coordinate S-adenosyl-L-methionine: glycine 204, aspartate 227, aspartate 247, methionine 248, and lysine 261. The active-site Proton acceptor is histidine 265.

Belongs to the class I-like SAM-binding methyltransferase superfamily. Cation-independent O-methyltransferase family. COMT subfamily. In terms of assembly, homodimer. In terms of tissue distribution, fruit. Not expressed in leaf.

The catalysed reaction is (E)-caffeate + S-adenosyl-L-methionine = (E)-ferulate + S-adenosyl-L-homocysteine + H(+). Its pathway is aromatic compound metabolism; phenylpropanoid biosynthesis. Catalyzes the conversion of caffeic acid to ferulic acid and of 5-hydroxyferulic acid to sinapic acid. The resulting products may subsequently be converted to the corresponding alcohols that are incorporated into lignins. In Capsicum annuum (Capsicum pepper), this protein is Caffeic acid 3-O-methyltransferase (COMT).